A 547-amino-acid polypeptide reads, in one-letter code: Chaperonin GroEL (547 aa).

ATP-binding positions include 30–33 (TLGP), K51, 87–91 (DGTTT), G415, and D496. Residues 528-547 (KEGAAPAGGMPDMGGMGGMM) are disordered. Residues 538-547 (PDMGGMGGMM) are compositionally biased toward gly residues.

The protein belongs to the chaperonin (HSP60) family. As to quaternary structure, forms a cylinder of 14 subunits composed of two heptameric rings stacked back-to-back. Interacts with the co-chaperonin GroES.

It localises to the cytoplasm. The enzyme catalyses ATP + H2O + a folded polypeptide = ADP + phosphate + an unfolded polypeptide.. Functionally, together with its co-chaperonin GroES, plays an essential role in assisting protein folding. The GroEL-GroES system forms a nano-cage that allows encapsulation of the non-native substrate proteins and provides a physical environment optimized to promote and accelerate protein folding. The protein is Chaperonin GroEL of Ruegeria sp. (strain TM1040) (Silicibacter sp.).